Consider the following 117-residue polypeptide: Large ribosomal subunit protein bL20 (117 aa).

Belongs to the bacterial ribosomal protein bL20 family.

Its function is as follows. Binds directly to 23S ribosomal RNA and is necessary for the in vitro assembly process of the 50S ribosomal subunit. It is not involved in the protein synthesizing functions of that subunit. The polypeptide is Large ribosomal subunit protein bL20 (Campylobacter fetus subsp. fetus (strain 82-40)).